A 126-amino-acid chain; its full sequence is Histone H2B type 1-M (126 aa).

The tract at residues 1 to 36 (MPEPVKSAPVPKKGSKKAINKAQKKDGKKRKRSRKE) is disordered. Proline 2 bears the N-acetylproline mark. At glutamate 3 the chain carries ADP-ribosyl glutamic acid. Lysine 6 is modified (N6-(2-hydroxyisobutyryl)lysine; alternate). Lysine 6 bears the N6-(beta-hydroxybutyryl)lysine; alternate mark. Lysine 6 bears the N6-acetyllysine; alternate mark. An N6-butyryllysine; alternate modification is found at lysine 6. Lysine 6 carries the N6-crotonyllysine; alternate modification. Lysine 6 carries the post-translational modification N6-lactoyllysine; alternate. A Glycyl lysine isopeptide (Lys-Gly) (interchain with G-Cter in SUMO2); alternate cross-link involves residue lysine 6. Serine 7 bears the ADP-ribosylserine mark. At lysine 12 the chain carries N6-(beta-hydroxybutyryl)lysine; alternate. Residues lysine 12 and lysine 13 each carry the N6-acetyllysine; alternate modification. N6-crotonyllysine; alternate is present on residues lysine 12 and lysine 13. Lysine 12 carries the post-translational modification N6-lactoyllysine; alternate. Lysine 13 bears the N6-(2-hydroxyisobutyryl)lysine; alternate mark. The residue at position 15 (serine 15) is a Phosphoserine; by STK4/MST1. 4 positions are modified to N6-acetyllysine; alternate: lysine 16, lysine 17, lysine 21, and lysine 24. An N6-crotonyllysine; alternate mark is found at lysine 16, lysine 17, lysine 21, and lysine 24. 4 positions are modified to N6-lactoyllysine; alternate: lysine 16, lysine 17, lysine 21, and lysine 24. Lysine 17 and lysine 21 each carry N6-(beta-hydroxybutyryl)lysine; alternate. At lysine 17 the chain carries N6-glutaryllysine; alternate. An N6-(2-hydroxyisobutyryl)lysine; alternate mark is found at lysine 21 and lysine 24. An N6-butyryllysine; alternate modification is found at lysine 21. Lysine 21 participates in a covalent cross-link: Glycyl lysine isopeptide (Lys-Gly) (interchain with G-Cter in SUMO2); alternate. Residue lysine 25 is modified to N6-(2-hydroxyisobutyryl)lysine. Lysine 35 is subject to N6-(2-hydroxyisobutyryl)lysine; alternate. At lysine 35 the chain carries N6-(beta-hydroxybutyryl)lysine; alternate. N6-crotonyllysine; alternate is present on lysine 35. Position 35 is an N6-glutaryllysine; alternate (lysine 35). Lysine 35 carries the post-translational modification N6-succinyllysine; alternate. A Glycyl lysine isopeptide (Lys-Gly) (interchain with G-Cter in ubiquitin); alternate cross-link involves residue lysine 35. Glutamate 36 is subject to PolyADP-ribosyl glutamic acid. At serine 37 the chain carries Phosphoserine; by AMPK. N6-(2-hydroxyisobutyryl)lysine; alternate occurs at positions 44, 47, and 58. Position 44 is an N6-lactoyllysine; alternate (lysine 44). N6-glutaryllysine; alternate occurs at positions 44 and 47. Lysine 47 bears the N6-methyllysine; alternate mark. Lysine 58 carries the post-translational modification N6,N6-dimethyllysine; alternate. Arginine 80 carries the dimethylated arginine modification. Lysine 86 is subject to N6-(2-hydroxyisobutyryl)lysine; alternate. At lysine 86 the chain carries N6-(beta-hydroxybutyryl)lysine; alternate. N6-acetyllysine; alternate is present on lysine 86. At lysine 86 the chain carries N6-lactoyllysine; alternate. N6,N6,N6-trimethyllysine; alternate is present on lysine 86. Residues arginine 87 and arginine 93 each carry the omega-N-methylarginine modification. Position 109 is an N6-(2-hydroxyisobutyryl)lysine; alternate (lysine 109). An N6-lactoyllysine; alternate modification is found at lysine 109. The residue at position 109 (lysine 109) is an N6-glutaryllysine; alternate. Lysine 109 is subject to N6-methyllysine; alternate. The O-linked (GlcNAc) serine glycan is linked to serine 113. At threonine 116 the chain carries Phosphothreonine. Residues lysine 117 and lysine 121 each carry the N6-(2-hydroxyisobutyryl)lysine; alternate modification. N6-(beta-hydroxybutyryl)lysine; alternate is present on residues lysine 117 and lysine 121. 2 positions are modified to N6-lactoyllysine; alternate: lysine 117 and lysine 121. Residues lysine 117 and lysine 121 each carry the N6-glutaryllysine; alternate modification. Lysine 117 and lysine 121 each carry N6-succinyllysine; alternate. Lysine 117 carries the N6-malonyllysine; alternate modification. Lysine 117 is modified (N6-methylated lysine; alternate). Lysine 121 participates in a covalent cross-link: Glycyl lysine isopeptide (Lys-Gly) (interchain with G-Cter in ubiquitin); alternate.

This sequence belongs to the histone H2B family. In terms of assembly, the nucleosome is a histone octamer containing two molecules each of H2A, H2B, H3 and H4 assembled in one H3-H4 heterotetramer and two H2A-H2B heterodimers. The octamer wraps approximately 147 bp of DNA. Post-translationally, monoubiquitination at Lys-35 (H2BK34Ub) by the MSL1/MSL2 dimer is required for histone H3 'Lys-4' (H3K4me) and 'Lys-79' (H3K79me) methylation and transcription activation at specific gene loci, such as HOXA9 and MEIS1 loci. Similarly, monoubiquitination at Lys-121 (H2BK120Ub) by the RNF20/40 complex gives a specific tag for epigenetic transcriptional activation and is also prerequisite for histone H3 'Lys-4' and 'Lys-79' methylation. It also functions cooperatively with the FACT dimer to stimulate elongation by RNA polymerase II. H2BK120Ub also acts as a regulator of mRNA splicing: deubiquitination by USP49 is required for efficient cotranscriptional splicing of a large set of exons. In terms of processing, phosphorylation at Ser-37 (H2BS36ph) by AMPK in response to stress promotes transcription. Phosphorylated on Ser-15 (H2BS14ph) by STK4/MST1 during apoptosis; which facilitates apoptotic chromatin condensation. Also phosphorylated on Ser-15 in response to DNA double strand breaks (DSBs), and in correlation with somatic hypermutation and immunoglobulin class-switch recombination. GlcNAcylation at Ser-113 promotes monoubiquitination of Lys-121. It fluctuates in response to extracellular glucose, and associates with transcribed genes. Post-translationally, ADP-ribosylated by PARP1 or PARP2 on Ser-7 (H2BS6ADPr) in response to DNA damage. H2BS6ADPr promotes recruitment of CHD1L. Mono-ADP-ribosylated on Glu-3 (H2BE2ADPr) by PARP3 in response to single-strand breaks. Poly ADP-ribosylation on Glu-36 (H2BE35ADPr) by PARP1 regulates adipogenesis: it inhibits phosphorylation at Ser-37 (H2BS36ph), thereby blocking expression of pro-adipogenetic genes. In terms of processing, crotonylation (Kcr) is specifically present in male germ cells and marks testis-specific genes in post-meiotic cells, including X-linked genes that escape sex chromosome inactivation in haploid cells. Crotonylation marks active promoters and enhancers and confers resistance to transcriptional repressors. It is also associated with post-meiotically activated genes on autosomes. Lactylated in macrophages by EP300/P300 by using lactoyl-CoA directly derived from endogenous or exogenous lactate, leading to stimulates gene transcription.

Its subcellular location is the nucleus. It is found in the chromosome. Its function is as follows. Core component of nucleosome. Nucleosomes wrap and compact DNA into chromatin, limiting DNA accessibility to the cellular machineries which require DNA as a template. Histones thereby play a central role in transcription regulation, DNA repair, DNA replication and chromosomal stability. DNA accessibility is regulated via a complex set of post-translational modifications of histones, also called histone code, and nucleosome remodeling. In Homo sapiens (Human), this protein is Histone H2B type 1-M.